The primary structure comprises 338 residues: Phenylalanine--tRNA ligase alpha subunit (338 aa).

E253 is a binding site for Mg(2+).

This sequence belongs to the class-II aminoacyl-tRNA synthetase family. Phe-tRNA synthetase alpha subunit type 1 subfamily. As to quaternary structure, tetramer of two alpha and two beta subunits. Mg(2+) is required as a cofactor.

It is found in the cytoplasm. It carries out the reaction tRNA(Phe) + L-phenylalanine + ATP = L-phenylalanyl-tRNA(Phe) + AMP + diphosphate + H(+). This is Phenylalanine--tRNA ligase alpha subunit from Pelobacter propionicus (strain DSM 2379 / NBRC 103807 / OttBd1).